The following is a 189-amino-acid chain: Apolipoprotein D (189 aa).

Positions 1–20 are cleaved as a signal peptide; that stretch reads MVPVLLLLPALAGLFGAAEG. Pyrrolidone carboxylic acid is present on Q21. Disulfide bonds link C28/C134 and C61/C185. 2 N-linked (GlcNAc...) asparagine glycosylation sites follow: N65 and N98.

It belongs to the calycin superfamily. Lipocalin family. In terms of assembly, homodimer.

It is found in the secreted. In terms of biological role, APOD occurs in the macromolecular complex with lecithin-transport and binding of bilin. Appears to be able to transport a variety of ligands in a number of different contexts. The sequence is that of Apolipoprotein D (APOD) from Bos taurus (Bovine).